We begin with the raw amino-acid sequence, 458 residues long: Transcription factor Atf1 (458 aa).

The region spanning 347–410 (EEKRRNFLER…VNLKTLLLAH (64 aa)) is the bZIP domain. Residues 349 to 378 (KRRNFLERNRVAALKCRQRKKQWLANLQNK) are basic motif. The segment at 389 to 403 (LTATVTQLREEIVNL) is leucine-zipper.

The protein belongs to the bZIP family.

Its subcellular location is the nucleus. Transcription factor that positively regulates vegetative growth, reproduction, and osmotic stress response. The sequence is that of Transcription factor Atf1 from Penicillium expansum (Blue mold rot fungus).